We begin with the raw amino-acid sequence, 53 residues long: MKLLTILILFYSFFMNLQALPDYHQANRCVLLGTRIGWNDDNSQDPNVYWKWC.

Residues 1–19 (MKLLTILILFYSFFMNLQA) form the signal peptide.

This is an uncharacterized protein from Autographa californica nuclear polyhedrosis virus (AcMNPV).